The following is a 197-amino-acid chain: Interleukin-17C (197 aa).

An N-terminal signal peptide occupies residues 1–18; it reads MTLLPGLLFLTWLHTCLA. Cystine bridges form between C129–C189 and C134–C191.

Belongs to the IL-17 family. Binds to a heterodimer formed by IL17RA and IL17RE.

It localises to the secreted. Functionally, cytokine that plays a crucial role in innate immunity of the epithelium, including to intestinal bacterial pathogens, in an autocrine manner. Stimulates the production of antibacterial peptides and pro-inflammatory molecules for host defense by signaling through the NF-kappa-B and MAPK pathways. Acts synergically with IL22 in inducing the expression of antibacterial peptides, including S100A8, S100A9, REG3A and REG3G. Synergy is also observed with TNF and IL1B in inducing DEFB2 from keratinocytes. Depending on the type of insult, may have both protective and pathogenic properties, either by maintaining epithelial homeostasis after an inflammatory challenge or by promoting inflammatory phenotype. Enhanced IL17C/IL17RE signaling may also lead to greater susceptibility to autoimmune diseases. The polypeptide is Interleukin-17C (IL17C) (Homo sapiens (Human)).